Reading from the N-terminus, the 107-residue chain is Phosphoribosyl-ATP pyrophosphatase (107 aa).

It belongs to the PRA-PH family.

The protein localises to the cytoplasm. The enzyme catalyses 1-(5-phospho-beta-D-ribosyl)-ATP + H2O = 1-(5-phospho-beta-D-ribosyl)-5'-AMP + diphosphate + H(+). It participates in amino-acid biosynthesis; L-histidine biosynthesis; L-histidine from 5-phospho-alpha-D-ribose 1-diphosphate: step 2/9. This Caulobacter vibrioides (strain ATCC 19089 / CIP 103742 / CB 15) (Caulobacter crescentus) protein is Phosphoribosyl-ATP pyrophosphatase (hisE).